Consider the following 103-residue polypeptide: Thioredoxin (103 aa).

Positions 1-103 (MVKEITDATF…ELDEVINKYV (103 aa)) constitute a Thioredoxin domain. An intrachain disulfide couples C28 to C31.

This sequence belongs to the thioredoxin family.

In terms of biological role, component of the thioredoxin-thioredoxin reductase system. Participates in various redox reactions through the reversible oxidation of its active center dithiol to a disulfide and catalyzes dithiol-disulfide exchange reactions. In Listeria innocua serovar 6a (strain ATCC BAA-680 / CLIP 11262), this protein is Thioredoxin (trxA).